Here is a 419-residue protein sequence, read N- to C-terminus: MGLRHSSRCLLLRRKMAEAESTEQQQQKHKQPQHQQQQSISSIPSSQSLQPSPLPKPVTSVHHVPPHPPHTPHVSALSACPGRGKMAKLLNPEEMTSRDYYFDSYAHFGIHEEMLKDEVRTLTYRNSMYHNKHIFKDKIVLDVGSGTGILSMFAAKAGAKHVYGIECSSISEYSEKIIKSNHLDSVITILKGKVEETELPVDQVDIIISEWMGYCLFYESMLNTVIYARDKWLKPGGFMFPDRATLYVVAIEDRQYKDFKIHWWENVYGFDMTCIRNVAMMEPLVDIVDPKQVVTNSCLVKEVDIYTVKTEDLSFTSAFCLQIQRNDYVHALVTYFNIEFTKCHKKTGFSTAPDAPSTHWKQTVFYLEDYLTVRRGEEILGSITVRPNENNERDLDFTFELDFKGQLCDAAISHDYKMR.

The span at 1–14 (MGLRHSSRCLLLRR) shows a compositional bias: basic residues. The segment at 1–79 (MGLRHSSRCL…HTPHVSALSA (79 aa)) is disordered. A lipid anchor (N-myristoyl glycine) is attached at G2. Positions 33–63 (QHQQQQSISSIPSSQSLQPSPLPKPVTSVHH) are enriched in low complexity. Omega-N-methylarginine is present on R83. R98 carries the post-translational modification Asymmetric dimethylarginine. The region spanning 98–402 (RDYYFDSYAH…RDLDFTFELD (305 aa)) is the SAM-dependent MTase PRMT-type domain. S-adenosyl-L-methionine is bound by residues H111, R120, G144, 144-147 (GSGT), E166, and E195. Residues E210 and E219 contribute to the active site.

The protein belongs to the class I-like SAM-binding methyltransferase superfamily. Protein arginine N-methyltransferase family. PRMT8 subfamily. In terms of assembly, homodimer. Tetramer; individual homodimers associates to form a homotetramer. Homooctamer; individual homodimers associates to form a homooctamer and homooligomerization is required for proper localization to the cell membrane.

The protein localises to the cell membrane. The catalysed reaction is L-arginyl-[protein] + S-adenosyl-L-methionine = N(omega)-methyl-L-arginyl-[protein] + S-adenosyl-L-homocysteine + H(+). It catalyses the reaction L-arginyl-[protein] + 2 S-adenosyl-L-methionine = N(omega),N(omega)-dimethyl-L-arginyl-[protein] + 2 S-adenosyl-L-homocysteine + 2 H(+). S-adenosyl-L-methionine-dependent and membrane-associated arginine methyltransferase that can both catalyze the formation of omega-N monomethylarginine (MMA) and asymmetrical dimethylarginine (aDMA). The protein is Protein arginine N-methyltransferase 8-B (prmt8b) of Danio rerio (Zebrafish).